Reading from the N-terminus, the 779-residue chain is MAEDNSWKTPSFRQSVVNKINEAIQQSGMTSSKNGLEMENHVFQKARNKDEYLGYVARLILHVREMNTKNKNQQNPAGGSQDGGNPNQQGGMPDPINALQTLATQGTRPQMMGGQMGPGGPMGNQMGGGNASNLLNTLNRPQMPMTGGMANMQGRVGTMGGPNQMGGMMPGQMPQGMPGMPNQMGGAMGPGGMSGGKIVGQMNPMGQMNPMQMGVSGMPQGAGQQQPQQPQGQQGGPGGPNQMNPMGGMGMQVNPGGHMNQNAINQQMNQVGMSSGGNQMGNLGGNSPMNPGNMGIAPNQVIRQQMPPGMNPNQQQLGMAGGQMNQMNQGVGGPGGNLGPVQQQQQPGQVGMAGMGPGGPGNLQQQNNPQQQSQGGPNAAPGQMNQVGGPGGNMQAMGNQGNFVPIGANPMVRKQDMMSGGQVYPGGVVRSVTPNQFLRQSPSPSVPSPAGPGSIGPQSHPGQMIPSPALIPSPSPQVSSNIPAPRNIGQSPGQSLNTPGQAAAPSPLNPQEEHLYKEKYRSLQKYIEPLKRMIAKMEHDDVDKMGKMKRLLDILCNPTCRIPLETLYKCEAALTSQLGTIREPPLNNPLVEAVSANLQSPLGNHTLQRTFRPCLEALFGPDIKNLPTPAKQPRLAIDEPSTSGSTGSQEIPHILQGEIARLDQKFKVSLDPCAIGDTKTIKLICWLDDKHLPCVPPVAVTIPEEYPFTSPSCSLIEQEYNATPFLIQVQKSFLARICKLPEMFSLSHLLDTWEMSVRQACSPNPSLVAPSATSVLLGM.

Composition is skewed to polar residues over residues 70-90 (NKNQQNPAGGSQDGGNPNQQG) and 98-108 (ALQTLATQGTR). 4 disordered regions span residues 70–131 (NKNQ…GGNA), 209–407 (NPMQ…VPIG), 437–512 (FLRQ…NPQE), and 629–649 (PAKQPRLAIDEPSTSGSTGSQ). A compositionally biased stretch (gly residues) spans 114 to 130 (GQMGPGGPMGNQMGGGN). Low complexity-rich tracts occupy residues 209-232 (NPMQMGVSGMPQGAGQQQPQQPQG) and 240-270 (PNQMNPMGGMGMQVNPGGHMNQNAINQQMNQ). Gly residues predominate over residues 274–284 (SSGGNQMGNLG). 3 stretches are compositionally biased toward low complexity: residues 285–295 (GNSPMNPGNMG), 304–329 (QQMPPGMNPNQQQLGMAGGQMNQMNQ), and 339–350 (GPVQQQQQPGQV). The segment covering 351-361 (GMAGMGPGGPG) has biased composition (gly residues). Composition is skewed to low complexity over residues 362 to 383 (NLQQQNNPQQQSQGGPNAAPGQ), 393 to 402 (NMQAMGNQGN), and 451 to 468 (GPGSIGPQSHPGQMIPSP). Composition is skewed to polar residues over residues 477-500 (QVSSNIPAPRNIGQSPGQSLNTPG) and 640-649 (PSTSGSTGSQ).

It belongs to the Mediator complex subunit 15 family. In terms of assembly, component of the Mediator complex.

The protein resides in the nucleus. Component of the Mediator complex, a coactivator involved in the regulated transcription of nearly all RNA polymerase II-dependent genes. Mediator functions as a bridge to convey information from gene-specific regulatory proteins to the basal RNA polymerase II transcription machinery. Mediator is recruited to promoters by direct interactions with regulatory proteins and serves as a scaffold for the assembly of a functional preinitiation complex with RNA polymerase II and the general transcription factors. This chain is Mediator of RNA polymerase II transcription subunit 15 (MED15), found in Aedes aegypti (Yellowfever mosquito).